An 87-amino-acid chain; its full sequence is Defensin-like protein 175 (87 aa).

A signal peptide spans 1–23 (MAKATSSLVVPIIFLVIFALVEQ). Intrachain disulfides connect C27–C66, C36–C55, C39–C60, and C43–C62.

The protein belongs to the DEFL family.

It is found in the secreted. This chain is Defensin-like protein 175, found in Arabidopsis thaliana (Mouse-ear cress).